The following is a 692-amino-acid chain: MARKTPLNRIRNIGIAAHIDAGKTTTSERILFYTGVSHKIGEVHDGAATMDWMEQEKERGITITSAATTCFWKDHQINLIDTPGHVDFTIEVERSMRVLDGAVSVFCSVGGVQPQSETVWRQANKYGVPRIVFVNKMDRIGANFYNVENQIKQRLKANPVPINIPIGAEDTFIGVIDLVQMKAIVWNNETMGAKYDVEEIPSDLLERAKEYREKLVEAIAEQDEALMEKYLGGEELSVEEIKKGIKIGCLNMSLVPMLCGSSFKNKGVQTLLDAVIDYLPAPTEVVDIKGIDPKTEEEVFVKSSDDGEFAGLAFKIMTDPFVGQLTFVRVYRGKLESGSYVYNSTKDKKERVGRLLKMHSNKREDIKEVYAGEICAFVGLKDTLTGDTLCDEKNAVVLERMEFPEPVIHIAVEPKTKADQEKMGVALGKLAEEDPSFRVMTQEETGQTLIGGMGELHLEIIVDRLKREFKVEAEIGQPQVAFRETIRSSVSKEHKYAKQSGGRGQYGHVFIKLEPKEPGSGYEFVNEISGGVIPKEYIPAVDKGIQEAMQNGVLAGYPVVDFKVTLYDGSYHDVDSSEMAFKIAGSMAFKEASRAANPVLLEPMMKVEVEVPEEYMGDVIGDLNRRRGQINSMDDRLGLKIVNAFVPLVEMFGYSTDLRSATQGRGTYSMEFDHYGEVPSNIAKEIVEKRKG.

In terms of domain architecture, tr-type G spans 8 to 283 (NRIRNIGIAA…AVIDYLPAPT (276 aa)). Residues 17–24 (AHIDAGKT), 81–85 (DTPGH), and 135–138 (NKMD) contribute to the GTP site.

The protein belongs to the TRAFAC class translation factor GTPase superfamily. Classic translation factor GTPase family. EF-G/EF-2 subfamily.

The protein resides in the cytoplasm. Functionally, catalyzes the GTP-dependent ribosomal translocation step during translation elongation. During this step, the ribosome changes from the pre-translocational (PRE) to the post-translocational (POST) state as the newly formed A-site-bound peptidyl-tRNA and P-site-bound deacylated tRNA move to the P and E sites, respectively. Catalyzes the coordinated movement of the two tRNA molecules, the mRNA and conformational changes in the ribosome. In Helicobacter acinonychis (strain Sheeba), this protein is Elongation factor G.